A 78-amino-acid polypeptide reads, in one-letter code: Serine rich endogenous peptide 19 (78 aa).

Positions 1–25 are cleaved as a signal peptide; sequence MCNIVVFLLTLTLFLFSGLSNTAFA. The short motif at 50-64 is the SCOOP motif element; it reads KIEVDGSCSRRAPGR. The SxS motif essential for MIK2 binding motif lies at 56-58; the sequence is SCS. Residues 57–78 form a disordered region; that stretch reads CSRRAPGRRRPPNRPPKPCTKP. Residues 69 to 78 show a composition bias toward pro residues; it reads NRPPKPCTKP.

The protein belongs to the serine rich endogenous peptide (SCOOP) phytocytokine family. In terms of assembly, interacts with MIK2 (via extracellular leucine-rich repeat domain); this interaction triggers the formation of complex between MIK2 and the BAK1/SERK3 and SERK4 coreceptors, and subsequent BAK1 activation by phosphorylation.

The protein resides in the cell membrane. The protein localises to the secreted. It is found in the extracellular space. Its subcellular location is the apoplast. Its function is as follows. Brassicaceae-specific phytocytokine (plant endogenous peptide released into the apoplast) perceived by MIK2 in a BAK1/SERK3 and SERK4 coreceptors-dependent manner, that modulates various physiological and antimicrobial processes including growth prevention and reactive oxygen species (ROS) response regulation. This is Serine rich endogenous peptide 19 from Arabidopsis thaliana (Mouse-ear cress).